A 333-amino-acid chain; its full sequence is Low specificity L-threonine aldolase (333 aa).

N6-(pyridoxal phosphate)lysine is present on Lys197.

It belongs to the threonine aldolase family. Homotetramer. Pyridoxal 5'-phosphate is required as a cofactor.

It catalyses the reaction L-threonine = acetaldehyde + glycine. The enzyme catalyses L-allo-threonine = acetaldehyde + glycine. Its function is as follows. Catalyzes the cleavage of L-allo-threonine and L-threonine to glycine and acetaldehyde. L-threo-phenylserine and L-erythro-phenylserine are also good substrates. The chain is Low specificity L-threonine aldolase (ltaE) from Escherichia coli O157:H7.